The sequence spans 244 residues: Prolactin-7D1 (244 aa).

A signal peptide spans 1-30; sequence MLPSLIQPCSSGTLLMLLMSNLFLWEKVSS. Disulfide bonds link Cys-99–Cys-215 and Cys-232–Cys-240.

This sequence belongs to the somatotropin/prolactin family.

It is found in the secreted. The polypeptide is Prolactin-7D1 (Prl7d1) (Mus musculus (Mouse)).